Consider the following 107-residue polypeptide: Large ribosomal subunit protein uL24 (107 aa).

The protein belongs to the universal ribosomal protein uL24 family. As to quaternary structure, part of the 50S ribosomal subunit.

Functionally, one of two assembly initiator proteins, it binds directly to the 5'-end of the 23S rRNA, where it nucleates assembly of the 50S subunit. Its function is as follows. One of the proteins that surrounds the polypeptide exit tunnel on the outside of the subunit. The sequence is that of Large ribosomal subunit protein uL24 from Natranaerobius thermophilus (strain ATCC BAA-1301 / DSM 18059 / JW/NM-WN-LF).